The sequence spans 413 residues: Putative competence-damage inducible protein (413 aa).

Belongs to the CinA family.

In Halothermothrix orenii (strain H 168 / OCM 544 / DSM 9562), this protein is Putative competence-damage inducible protein.